Reading from the N-terminus, the 296-residue chain is tRNA dimethylallyltransferase (296 aa).

Gly9–Thr16 provides a ligand contact to ATP. Thr11–Thr16 is a binding site for substrate. Positions Asp34 to Gln37 are interaction with substrate tRNA.

This sequence belongs to the IPP transferase family. In terms of assembly, monomer. Mg(2+) serves as cofactor.

It carries out the reaction adenosine(37) in tRNA + dimethylallyl diphosphate = N(6)-dimethylallyladenosine(37) in tRNA + diphosphate. Its function is as follows. Catalyzes the transfer of a dimethylallyl group onto the adenine at position 37 in tRNAs that read codons beginning with uridine, leading to the formation of N6-(dimethylallyl)adenosine (i(6)A). The chain is tRNA dimethylallyltransferase from Chloroflexus aurantiacus (strain ATCC 29366 / DSM 635 / J-10-fl).